We begin with the raw amino-acid sequence, 593 residues long: Arginine--tRNA ligase (593 aa).

The 'HIGH' region signature appears at 138–148 (ANPTGPLHVGH).

Belongs to the class-I aminoacyl-tRNA synthetase family. As to quaternary structure, monomer.

The protein resides in the cytoplasm. The enzyme catalyses tRNA(Arg) + L-arginine + ATP = L-arginyl-tRNA(Arg) + AMP + diphosphate. The chain is Arginine--tRNA ligase from Burkholderia orbicola (strain MC0-3).